Consider the following 577-residue polypeptide: Multidrug transporter TPO1_2 (577 aa).

A disordered region spans residues 1–63 (MSSTSSDRPY…ALSKNSTQTS (63 aa)). N-linked (GlcNAc...) asparagine glycans are attached at residues Asn-44 and Asn-58. Helical transmembrane passes span 137 to 157 (VMLC…SSIF), 167 to 187 (IYHV…LGFA), 204 to 224 (GVLV…ATAK), 234 to 254 (FFAG…FADM), 263 to 283 (AICL…VIGS), 293 to 313 (WLEY…LFFF), 368 to 388 (PLLL…YLLL), 406 to 426 (ELPY…IWWM), 446 to 466 (LLPM…FCWT), 475 to 495 (WIVP…IFLP), 504 to 526 (YLLI…GAAF), and 541 to 561 (YAGL…LLFL).

This sequence belongs to the major facilitator superfamily. DHA1 family. Polyamines/proton antiporter (TC 2.A.1.2.16) subfamily.

It is found in the cell membrane. In terms of biological role, multidrug resistance transporter involved in resistance to azole antifungal drugs such as the imidazoles miconazole, ketoconazole, and tioconazole; as well as the triazoles itraconazole and fluconazole. Also plays a role in the resistance to other antifungal drug families such as the polyene amphotericin B, the pyrimide analog flucytosine, the fungicide mancozeb, and the polyamine spermine. Decreases the intracellular accumulation of clotrimazole by mediating its extrusion from cells. Plays a role in biofilm formation. This chain is Multidrug transporter TPO1_2, found in Candida glabrata (strain ATCC 2001 / BCRC 20586 / JCM 3761 / NBRC 0622 / NRRL Y-65 / CBS 138) (Yeast).